A 122-amino-acid chain; its full sequence is Large ribosomal subunit protein uL14 (122 aa).

The protein belongs to the universal ribosomal protein uL14 family. As to quaternary structure, part of the 50S ribosomal subunit. Forms a cluster with proteins L3 and L19. In the 70S ribosome, L14 and L19 interact and together make contacts with the 16S rRNA in bridges B5 and B8.

Binds to 23S rRNA. Forms part of two intersubunit bridges in the 70S ribosome. The sequence is that of Large ribosomal subunit protein uL14 from Thioalkalivibrio sulfidiphilus (strain HL-EbGR7).